The primary structure comprises 388 residues: Succinate--CoA ligase [ADP-forming] subunit beta (388 aa).

The region spanning 9-244 (KQLFKEFGLP…PSQDDAREAE (236 aa)) is the ATP-grasp domain. Residues Lys46, 53-55 (GRG), Glu99, Thr102, and Glu107 contribute to the ATP site. 2 residues coordinate Mg(2+): Asn199 and Asp213. Substrate contacts are provided by residues Asn264 and 321–323 (GIV).

It belongs to the succinate/malate CoA ligase beta subunit family. In terms of assembly, heterotetramer of two alpha and two beta subunits. Requires Mg(2+) as cofactor.

The enzyme catalyses succinate + ATP + CoA = succinyl-CoA + ADP + phosphate. It carries out the reaction GTP + succinate + CoA = succinyl-CoA + GDP + phosphate. The protein operates within carbohydrate metabolism; tricarboxylic acid cycle; succinate from succinyl-CoA (ligase route): step 1/1. Its function is as follows. Succinyl-CoA synthetase functions in the citric acid cycle (TCA), coupling the hydrolysis of succinyl-CoA to the synthesis of either ATP or GTP and thus represents the only step of substrate-level phosphorylation in the TCA. The beta subunit provides nucleotide specificity of the enzyme and binds the substrate succinate, while the binding sites for coenzyme A and phosphate are found in the alpha subunit. The sequence is that of Succinate--CoA ligase [ADP-forming] subunit beta from Idiomarina loihiensis (strain ATCC BAA-735 / DSM 15497 / L2-TR).